The chain runs to 200 residues: NAD(P)H dehydrogenase (quinone) (200 aa).

In terms of domain architecture, Flavodoxin-like spans Val4–Val191. Residues Ser10–Val15 and Thr79–Phe81 contribute to the FMN site. Tyr12 contacts NAD(+). Trp99 lines the substrate pocket. Residues Ser114–Gly120 and His135 each bind FMN.

It belongs to the WrbA family. Requires FMN as cofactor.

The enzyme catalyses a quinone + NADH + H(+) = a quinol + NAD(+). It catalyses the reaction a quinone + NADPH + H(+) = a quinol + NADP(+). The sequence is that of NAD(P)H dehydrogenase (quinone) from Burkholderia cenocepacia (strain HI2424).